The chain runs to 1342 residues: DNA-directed RNA polymerase subunit beta (1342 aa).

It belongs to the RNA polymerase beta chain family. As to quaternary structure, the RNAP catalytic core consists of 2 alpha, 1 beta, 1 beta' and 1 omega subunit. When a sigma factor is associated with the core the holoenzyme is formed, which can initiate transcription.

It catalyses the reaction RNA(n) + a ribonucleoside 5'-triphosphate = RNA(n+1) + diphosphate. Functionally, DNA-dependent RNA polymerase catalyzes the transcription of DNA into RNA using the four ribonucleoside triphosphates as substrates. This Citrobacter koseri (strain ATCC BAA-895 / CDC 4225-83 / SGSC4696) protein is DNA-directed RNA polymerase subunit beta.